The following is a 297-amino-acid chain: Acetyl-coenzyme A carboxylase carboxyl transferase subunit beta (297 aa).

Residues 27–296 (LWHKCPSCEA…PEQAREAAAV (270 aa)) enclose the CoA carboxyltransferase N-terminal domain. 4 residues coordinate Zn(2+): cysteine 31, cysteine 34, cysteine 50, and cysteine 53. The C4-type zinc-finger motif lies at 31 to 53 (CPSCEAVLYRPELEKTLDVCPKC).

The protein belongs to the AccD/PCCB family. Acetyl-CoA carboxylase is a heterohexamer composed of biotin carboxyl carrier protein (AccB), biotin carboxylase (AccC) and two subunits each of ACCase subunit alpha (AccA) and ACCase subunit beta (AccD). Requires Zn(2+) as cofactor.

The protein resides in the cytoplasm. It catalyses the reaction N(6)-carboxybiotinyl-L-lysyl-[protein] + acetyl-CoA = N(6)-biotinyl-L-lysyl-[protein] + malonyl-CoA. Its pathway is lipid metabolism; malonyl-CoA biosynthesis; malonyl-CoA from acetyl-CoA: step 1/1. Its function is as follows. Component of the acetyl coenzyme A carboxylase (ACC) complex. Biotin carboxylase (BC) catalyzes the carboxylation of biotin on its carrier protein (BCCP) and then the CO(2) group is transferred by the transcarboxylase to acetyl-CoA to form malonyl-CoA. This is Acetyl-coenzyme A carboxylase carboxyl transferase subunit beta from Pseudomonas putida (strain GB-1).